A 264-amino-acid polypeptide reads, in one-letter code: MSLSLLFLIFCSHLIHSAWAHGEKRLTPEGQPAPPRNPGDSSGSRGRSSATFSSSSASSPVAASPGSQGSGSEHSSFQWSPSGRRTGSLYCRVGIGFHLQIYPDGKVNGSHEASVLSILEIFAVSQGIVGIRGVFSNKFLAMSKKGKLHASAKFTDDCKFRERFQENSYNTYASAIHRTEKTGREWYVALNKRGKAKRGCSPRVKPQHVSTHFLPRFKQSEQPELSFTVTVPEKKKPPVKPKVPLSQPRRSPSPVKYRLKFRFG.

Residues Met1–Ala20 form the signal peptide. Residues Arg25–Pro81 are disordered. Residues Pro38–Ser72 show a composition bias toward low complexity. Asn108 carries N-linked (GlcNAc...) asparagine glycosylation. Residues Phe227–Pro254 form a disordered region.

This sequence belongs to the heparin-binding growth factors family. As to quaternary structure, interacts with FGFR1 and FGFR2. Affinity between fibroblast growth factors (FGFs) and their receptors is increased by heparan sulfate glycosaminoglycans that function as coreceptors.

It is found in the secreted. Functionally, plays an important role in the regulation of cell proliferation and cell differentiation. Required for normal regulation of the hair growth cycle. Functions as an inhibitor of hair elongation by promoting progression from anagen, the growth phase of the hair follicle, into catagen the apoptosis-induced regression phase. The polypeptide is Fibroblast growth factor 5 (Fgf5) (Mus musculus (Mouse)).